A 255-amino-acid chain; its full sequence is 5'-nucleotidase SurE (255 aa).

Positions 8, 9, 39, and 95 each coordinate a divalent metal cation.

The protein belongs to the SurE nucleotidase family. Requires a divalent metal cation as cofactor.

The protein resides in the cytoplasm. The enzyme catalyses a ribonucleoside 5'-phosphate + H2O = a ribonucleoside + phosphate. Functionally, nucleotidase that shows phosphatase activity on nucleoside 5'-monophosphates. The polypeptide is 5'-nucleotidase SurE (Thermosipho melanesiensis (strain DSM 12029 / CIP 104789 / BI429)).